The primary structure comprises 228 residues: Urease accessory protein UreF (228 aa).

Belongs to the UreF family. UreD, UreF and UreG form a complex that acts as a GTP-hydrolysis-dependent molecular chaperone, activating the urease apoprotein by helping to assemble the nickel containing metallocenter of UreC. The UreE protein probably delivers the nickel.

Its subcellular location is the cytoplasm. Functionally, required for maturation of urease via the functional incorporation of the urease nickel metallocenter. In Lachnoclostridium phytofermentans (strain ATCC 700394 / DSM 18823 / ISDg) (Clostridium phytofermentans), this protein is Urease accessory protein UreF.